The sequence spans 84 residues: MSKGHSLQDPYLNTLRKERVPVSIYLVNGIKLQGQIESFDQFVILLKNTVSQMVYKHAISTVVPSRPVRLPTASEGEQPEPGNA.

The Sm domain maps to 9 to 68; sequence DPYLNTLRKERVPVSIYLVNGIKLQGQIESFDQFVILLKNTVSQMVYKHAISTVVPSRPV.

This sequence belongs to the Hfq family. In terms of assembly, homohexamer.

In terms of biological role, RNA chaperone that binds small regulatory RNA (sRNAs) and mRNAs to facilitate mRNA translational regulation in response to envelope stress, environmental stress and changes in metabolite concentrations. Also binds with high specificity to tRNAs. The chain is RNA-binding protein Hfq from Azotobacter vinelandii (strain DJ / ATCC BAA-1303).